The following is a 563-amino-acid chain: Protein NOXP20 (563 aa).

A disordered region spans residues 1–84 (MSDDAGDTLA…ANALEPPLNG (84 aa)). Positions 56–68 (AAVQGAGAAAIGP) are enriched in low complexity. Ser-120 carries the phosphoserine modification. Residues 165–206 (VNSGSSEGAQPNTENGVPEITDAATDQGPAESPPTSPSSASR) are disordered. Positions 166 to 179 (NSGSSEGAQPNTEN) are enriched in polar residues. Phosphothreonine is present on residues Thr-185 and Thr-189. Ser-196 bears the Phosphoserine mark. Thr-199 is subject to Phosphothreonine. Residues Ser-202 and Ser-261 each carry the phosphoserine modification. The stretch at 343–367 (AAKELENEENQEEQGLEEKGEEFAR) forms a coiled coil. The segment at 411 to 436 (SEEETKKEEKEEKSQDPQEDKKEEKK) is disordered.

This sequence belongs to the FAM114 family.

It localises to the cytoplasm. May play a role in neuronal cell development. The sequence is that of Protein NOXP20 (FAM114A1) from Homo sapiens (Human).